The following is a 483-amino-acid chain: AP-3 complex subunit mu (483 aa).

Positions asparagine 211–arginine 482 constitute an MHD domain.

Belongs to the adaptor complexes medium subunit family. As to quaternary structure, adaptor protein complex 3 (AP-3) is a heterotetramer composed of 2 large adaptins (APL5 and APL6), a medium adaptin (APM3) and a small adaptin (APS3).

The protein localises to the golgi apparatus. It localises to the cytoplasmic vesicle membrane. Part of the AP-3 complex, an adaptor-related complex which is not clathrin-associated. The complex is associated with the Golgi region as well as more peripheral structures. It facilitates the budding of vesicles from the Golgi membrane and may be directly involved in trafficking to the vacuole. Required for the transport via the ALP pathway, which directs the transport of the cargo proteins PHO8 and VAM3 to the vacuole. This is AP-3 complex subunit mu (APM3) from Saccharomyces cerevisiae (strain ATCC 204508 / S288c) (Baker's yeast).